We begin with the raw amino-acid sequence, 1036 residues long: uncharacterized protein (1036 aa).

This is an uncharacterized protein from Schizosaccharomyces pombe (strain 972 / ATCC 24843) (Fission yeast).